The chain runs to 524 residues: Putative ATP-dependent RNA helicase R458 (524 aa).

In terms of domain architecture, Helicase ATP-binding spans 125–338 (VPELIQRKDT…NSYFRKYSPI (214 aa)). 138-145 (FKSGTGKT) is a binding site for ATP. The DEFD box motif lies at 268 to 271 (DEFD). In terms of domain architecture, Helicase C-terminal spans 373 to 524 (IILDLLKQCR…QLPGDLSTLL (152 aa)).

Belongs to the DEAD box helicase family. eIF4A subfamily.

It carries out the reaction ATP + H2O = ADP + phosphate + H(+). Putative ATP-dependent RNA helicase. The polypeptide is Putative ATP-dependent RNA helicase R458 (Acanthamoeba polyphaga mimivirus (APMV)).